Here is a 248-residue protein sequence, read N- to C-terminus: Probable transcriptional regulatory protein PFL_4766 (248 aa).

Belongs to the TACO1 family.

The protein resides in the cytoplasm. This is Probable transcriptional regulatory protein PFL_4766 from Pseudomonas fluorescens (strain ATCC BAA-477 / NRRL B-23932 / Pf-5).